A 582-amino-acid polypeptide reads, in one-letter code: ATP-dependent lipid A-core flippase (582 aa).

6 helical membrane-spanning segments follow: residues 23 to 43, 61 to 81, 140 to 160, 163 to 183, 247 to 267, and 273 to 293; these read AAFI…TLFL, ILLY…SLNV, AVLV…LMFY, WQLS…VGVV, AIST…VLVI, and MLGE…IMLL. Positions 26 to 308 constitute an ABC transmembrane type-1 domain; that stretch reads IAAILCMIGY…LTNVNSDFQR (283 aa). An ABC transporter domain is found at 340–576; the sequence is IVFDDVTFSY…EGAYFQLHNL (237 aa). Residue 374–381 participates in ATP binding; the sequence is GRSGSGKS.

The protein belongs to the ABC transporter superfamily. Lipid exporter (TC 3.A.1.106) family. In terms of assembly, homodimer.

Its subcellular location is the cell inner membrane. The enzyme catalyses ATP + H2O + lipid A-core oligosaccharideSide 1 = ADP + phosphate + lipid A-core oligosaccharideSide 2.. In terms of biological role, involved in lipopolysaccharide (LPS) biosynthesis. Translocates lipid A-core from the inner to the outer leaflet of the inner membrane. Transmembrane domains (TMD) form a pore in the inner membrane and the ATP-binding domain (NBD) is responsible for energy generation. This is ATP-dependent lipid A-core flippase from Idiomarina loihiensis (strain ATCC BAA-735 / DSM 15497 / L2-TR).